A 113-amino-acid polypeptide reads, in one-letter code: Large ribosomal subunit protein bL19 (113 aa).

This sequence belongs to the bacterial ribosomal protein bL19 family.

In terms of biological role, this protein is located at the 30S-50S ribosomal subunit interface and may play a role in the structure and function of the aminoacyl-tRNA binding site. This is Large ribosomal subunit protein bL19 from Corynebacterium urealyticum (strain ATCC 43042 / DSM 7109).